The primary structure comprises 175 residues: Alkyl hydroperoxide reductase AhpD (175 aa).

Cys-131 functions as the Proton donor in the catalytic mechanism. A disulfide bridge links Cys-131 with Cys-134. Residue Cys-134 is the Cysteine sulfenic acid (-SOH) intermediate of the active site.

It belongs to the AhpD family.

The enzyme catalyses N(6)-[(R)-dihydrolipoyl]-L-lysyl-[lipoyl-carrier protein] + a hydroperoxide = N(6)-[(R)-lipoyl]-L-lysyl-[lipoyl-carrier protein] + an alcohol + H2O. Functionally, antioxidant protein with alkyl hydroperoxidase activity. Required for the reduction of the AhpC active site cysteine residues and for the regeneration of the AhpC enzyme activity. This is Alkyl hydroperoxide reductase AhpD from Brucella anthropi (strain ATCC 49188 / DSM 6882 / CCUG 24695 / JCM 21032 / LMG 3331 / NBRC 15819 / NCTC 12168 / Alc 37) (Ochrobactrum anthropi).